The primary structure comprises 297 residues: Cytosolic Fe-S cluster assembly factor CFD1 (297 aa).

An ATP-binding site is contributed by 15–22 (GKGGVGKS). [4Fe-4S] cluster-binding residues include Cys-216 and Cys-219.

This sequence belongs to the Mrp/NBP35 ATP-binding proteins family. NUBP2/CFD1 subfamily. In terms of assembly, heterotetramer of 2 NBP35 and 2 CFD1 chains. It depends on [4Fe-4S] cluster as a cofactor.

Its subcellular location is the cytoplasm. Functionally, component of the cytosolic iron-sulfur (Fe/S) protein assembly (CIA) machinery. Required for maturation of extramitochondrial Fe-S proteins. The NBP35-CFD1 heterotetramer forms a Fe-S scaffold complex, mediating the de novo assembly of an Fe-S cluster and its transfer to target apoproteins. In Phaeosphaeria nodorum (strain SN15 / ATCC MYA-4574 / FGSC 10173) (Glume blotch fungus), this protein is Cytosolic Fe-S cluster assembly factor CFD1.